The following is a 58-amino-acid chain: Histatherin (58 aa).

The first 19 residues, 1 to 19 (MKIFIFIFIMALILAMIRA), serve as a signal peptide directing secretion.

The protein belongs to the histatin/statherin family. As to expression, expressed in mammary glands.

It localises to the secreted. This is Histatherin from Bos taurus (Bovine).